We begin with the raw amino-acid sequence, 310 residues long: Methionyl-tRNA formyltransferase (310 aa).

Ser-111–Pro-114 provides a ligand contact to (6S)-5,6,7,8-tetrahydrofolate.

Belongs to the Fmt family.

The enzyme catalyses L-methionyl-tRNA(fMet) + (6R)-10-formyltetrahydrofolate = N-formyl-L-methionyl-tRNA(fMet) + (6S)-5,6,7,8-tetrahydrofolate + H(+). Functionally, attaches a formyl group to the free amino group of methionyl-tRNA(fMet). The formyl group appears to play a dual role in the initiator identity of N-formylmethionyl-tRNA by promoting its recognition by IF2 and preventing the misappropriation of this tRNA by the elongation apparatus. This chain is Methionyl-tRNA formyltransferase, found in Rhodopseudomonas palustris (strain BisB18).